A 169-amino-acid polypeptide reads, in one-letter code: MLATRCKCNLPSRSFVAPARSVRTRALHVEGRFGGGRGGNVIDRPDVDVSKRLGGFDLSDWNIPSWDAKTDNGNNGSNTDKDKKSPPGGGNYRVLLLDSPQHTEKGVVAAITRVVPGTNPDHARNCFATSKQLGMAIITTALKEHAELYREQLFTYRVRTALEPDNSTV.

The transit peptide at 1–33 directs the protein to the chloroplast; sequence MLATRCKCNLPSRSFVAPARSVRTRALHVEGRF. Residues 67–92 are disordered; the sequence is DAKTDNGNNGSNTDKDKKSPPGGGNY.

It belongs to the ClpS family.

It localises to the plastid. It is found in the chloroplast stroma. In terms of biological role, small adapter protein that modulate the activity of plastid Clp protease system (CLPC). Probably involved in substrate selection for plastid CLPC. The protein is ATP-dependent Clp protease adapter protein CLPS2, chloroplastic of Chlamydomonas reinhardtii (Chlamydomonas smithii).